Consider the following 591-residue polypeptide: Aspartate--tRNA ligase (591 aa).

Residue glutamate 176 coordinates L-aspartate. Residues 200–203 (QILK) form an aspartate region. Arginine 222 lines the L-aspartate pocket. ATP is bound by residues 222 to 224 (RDE) and glutamine 231. Histidine 450 lines the L-aspartate pocket. Glutamate 484 provides a ligand contact to ATP. Residue arginine 491 coordinates L-aspartate. 536 to 539 (GLDR) serves as a coordination point for ATP.

It belongs to the class-II aminoacyl-tRNA synthetase family. Type 1 subfamily. In terms of assembly, homodimer.

Its subcellular location is the cytoplasm. The catalysed reaction is tRNA(Asp) + L-aspartate + ATP = L-aspartyl-tRNA(Asp) + AMP + diphosphate. Its function is as follows. Catalyzes the attachment of L-aspartate to tRNA(Asp) in a two-step reaction: L-aspartate is first activated by ATP to form Asp-AMP and then transferred to the acceptor end of tRNA(Asp). In Listeria welshimeri serovar 6b (strain ATCC 35897 / DSM 20650 / CCUG 15529 / CIP 8149 / NCTC 11857 / SLCC 5334 / V8), this protein is Aspartate--tRNA ligase.